The sequence spans 76 residues: Conotoxin Vc6.6 (76 aa).

The N-terminal stretch at 1-22 (MKLTCMVIVAVLFLTANTFVTA) is a signal peptide. A propeptide spanning residues 23-52 (VPHSSNALENLYLKAHHEMNNPKDSELNKR) is cleaved from the precursor. 3 disulfides stabilise this stretch: Cys-53-Cys-67, Cys-60-Cys-71, and Cys-66-Cys-75.

It belongs to the conotoxin O1 superfamily. Expressed by the venom duct.

It localises to the secreted. The polypeptide is Conotoxin Vc6.6 (Conus victoriae (Queen Victoria cone)).